Here is a 443-residue protein sequence, read N- to C-terminus: MYLPQEIIRKKRDNKELTAEEINFFIQGVAKETVSEGQIAAFAMAVYFNEMTMPERIALTCAMRDSGMVIDWSHMNFDGPIVDKHSTGGVGDVTSLMLGPMVAACGGYVPMISGRGLGHTGGTLDKLESIAGYNITPSNDVFGKVTKEAGVAIIGQTGDLAPADKRVYATRDVTATVDNISLITASILSKKLAAGLDSLVMDVKVGSGAFMPTYEASEELAKSIVAVANGAGTKTTALLTDMNQVLASTAGNALEVREAIRFLTGEYRNPRLYEVTMALCAEMLVIANLAKDEQDARAKLQTVLDNGKAAECFGKMVFGLGGPSDIIENYDNHLESAQIIKPVFADTTGFVQAMDTRDLGMAVVGMGGGRRVASDTIDYAVGLSDMIRLGQTADNQQPLAMIHARNEEQWQQAANAVKAAIVISEKQPEATPEVYRKIRPEDV.

This sequence belongs to the thymidine/pyrimidine-nucleoside phosphorylase family. As to quaternary structure, homodimer.

It carries out the reaction thymidine + phosphate = 2-deoxy-alpha-D-ribose 1-phosphate + thymine. It participates in pyrimidine metabolism; dTMP biosynthesis via salvage pathway; dTMP from thymine: step 1/2. The enzymes which catalyze the reversible phosphorolysis of pyrimidine nucleosides are involved in the degradation of these compounds and in their utilization as carbon and energy sources, or in the rescue of pyrimidine bases for nucleotide synthesis. This Aliivibrio fischeri (strain ATCC 700601 / ES114) (Vibrio fischeri) protein is Thymidine phosphorylase.